Reading from the N-terminus, the 201-residue chain is Retinol-binding protein 4 (201 aa).

The N-terminal stretch at 1 to 18 (MEWVWALVLLAALGGGSA) is a signal peptide. Disulfide bonds link Cys-22-Cys-178, Cys-88-Cys-192, and Cys-138-Cys-147. A substrate-binding site is contributed by Gln-116. Arg-139 carries the post-translational modification Omega-N-methylarginine.

The protein belongs to the calycin superfamily. Lipocalin family. In terms of assembly, interacts with TTR. Interaction with TTR prevents its loss by filtration through the kidney glomeruli. Interacts with STRA6.

The protein resides in the secreted. Retinol-binding protein that mediates retinol transport in blood plasma. Delivers retinol from the liver stores to the peripheral tissues. Transfers the bound all-trans retinol to STRA6, that then facilitates retinol transport across the cell membrane. This is Retinol-binding protein 4 (Rbp4) from Mus musculus (Mouse).